A 255-amino-acid chain; its full sequence is MTSIPVSSFLLAALVLQYATSDAVNYCRLPCRGDNYHVGCGEPAYAQECGQSPRTRELLKEHRNEILSKINDVRDHVAKGSWGLPVAARMKVVVWDAELAGLAKRHTKGCVGETHACRNTERFWLPGQLNFKYSGDKLPRIKELIDDAVKKGHLQKHNITREIIGNYRENGPNGDVKELALAISDRVTAVGCGLTTWQDGAKARALLTCNFSSQNTRGRPVYKIGNSPGEKCIEKDETYKNLCPATEPIDPNKSN.

The signal sequence occupies residues methionine 1–alanine 23. 3 cysteine pairs are disulfide-bonded: cysteine 27/cysteine 40, cysteine 31/cysteine 117, and cysteine 49/cysteine 110. The Cell attachment site motif lies at arginine 32–aspartate 34. Residues leucine 67–phenylalanine 211 form the SCP domain. Tryptophan 82, histidine 153, and lysine 156 together coordinate leukotriene E4. Cystine bridges form between cysteine 192-cysteine 209 and cysteine 232-cysteine 243.

The protein belongs to the CRISP family. As to expression, expressed in salivary glands.

Its subcellular location is the secreted. Functionally, anti-inflammatory scavenger of eicosanoids and antithrombotic protein that inhibits platelets aggregation induced by collagen, ADP and convulxin (GPVI agonist). Exhibits high affinity binding for glycoprotein IIb-IIIa receptor (ITGA2B/ITGB3) and endothelial cell alphaVbeta3 (ITGAV/ITGB3) integrins, but not for alpha-5/beta-1 or alpha-2/beta-1. Accordingly, it blocks endothelial cell adhesion to vitronectin (IC(50)~1 nM) and marginally to fibronectin (IC(50)~1 uM), but not to collagen. It also inhibits fibroblast growth factor (FGF)-induced endothelial cell proliferation, and attenuates tube formation in vitro. In addition, it dose-dependently attenuates thrombus formation to collagen under flow. Also binds proinflammatory cysteinyl leukotrienes (leukotrienes C4 (LTC4), D4 (LTD4) and E4 (LTE4)) with submicromolar affinities. This Tabanus yao (Horsefly) protein is Tablysin 15.